Here is a 518-residue protein sequence, read N- to C-terminus: DNA-(apurinic or apyrimidinic site) endonuclease 2 (518 aa).

2 residues coordinate Mg(2+): asparagine 8 and glutamate 48. The active site involves tyrosine 156. Mg(2+) contacts are provided by aspartate 197, asparagine 199, aspartate 303, and histidine 304. Residue aspartate 197 is the Proton donor/acceptor of the active site. Residue histidine 304 is the Proton acceptor of the active site. Residues 355–405 (STLQHNNQTRVQTCQNKAQVRSTRPQPSQVGSSRGQKNLKSYFQPSPSCPQ) are compositionally biased toward polar residues. The tract at residues 355–407 (STLQHNNQTRVQTCQNKAQVRSTRPQPSQVGSSRGQKNLKSYFQPSPSCPQAS) is disordered. Lysine 371 participates in a covalent cross-link: Glycyl lysine isopeptide (Lys-Gly) (interchain with G-Cter in ubiquitin). Residues 390–397 (QKNLKSYF) are required for the interaction and colocalization with PCNA in nuclear foci in presence of oxidative-induced DNA damaging agents. The Zn(2+) site is built by cysteine 469, histidine 472, cysteine 495, and cysteine 509. A GRF-type zinc finger spans residues 469–518 (CGGHREPCVMRTVKKPGPNLGRRFYMCARPRGPPTDPSSRCNFFLWSRPS).

Belongs to the DNA repair enzymes AP/ExoA family. Interacts with PCNA; this interaction is triggered by reactive oxygen species and increased by misincorporation of uracil in nuclear DNA. The cofactor is Mg(2+). It depends on Mn(2+) as a cofactor. Ubiquitinated by the CUL9-RBX1 complex. Ubiquitinated by MKRN3 at Lys-371 leading to proteasomal degradation. As to expression, highly expressed in brain and kidney. Weakly expressed in the fetal brain.

The protein localises to the nucleus. Its subcellular location is the cytoplasm. It is found in the mitochondrion. It catalyses the reaction Exonucleolytic cleavage in the 3'- to 5'-direction to yield nucleoside 5'-phosphates.. 3'-5' exonuclease activity is activated by sodium and manganese. 3'-5' exonuclease and 3'-phosphodiesterase activities are stimulated in presence of PCNA. Functionally, functions as a weak apurinic/apyrimidinic (AP) endodeoxyribonuclease in the DNA base excision repair (BER) pathway of DNA lesions induced by oxidative and alkylating agents. Initiates repair of AP sites in DNA by catalyzing hydrolytic incision of the phosphodiester backbone immediately adjacent to the damage, generating a single-strand break with 5'-deoxyribose phosphate and 3'-hydroxyl ends. Also displays double-stranded DNA 3'-5' exonuclease, 3'-phosphodiesterase activities. Shows robust 3'-5' exonuclease activity on 3'-recessed heteroduplex DNA and is able to remove mismatched nucleotides preferentially. Also exhibits 3'-5' exonuclease activity on a single nucleotide gap containing heteroduplex DNA and on blunt-ended substrates. Shows fairly strong 3'-phosphodiesterase activity involved in the removal of 3'-damaged termini formed in DNA by oxidative agents. In the nucleus functions in the PCNA-dependent BER pathway. Plays a role in reversing blocked 3' DNA ends, problematic lesions that preclude DNA synthesis. Required for somatic hypermutation (SHM) and DNA cleavage step of class switch recombination (CSR) of immunoglobulin genes. Required for proper cell cycle progression during proliferation of peripheral lymphocytes. The protein is DNA-(apurinic or apyrimidinic site) endonuclease 2 (APEX2) of Homo sapiens (Human).